The sequence spans 891 residues: Longitudinals lacking protein, isoform G (891 aa).

Residues 32–97 enclose the BTB domain; the sequence is VDCTLAAEGK…MYRGEVNISQ (66 aa). Disordered stretches follow at residues 115 to 200 and 228 to 340; these read LSDN…SSVL and SSGP…ASAS. Position 140 is a phosphoserine (Ser140). A Phosphothreonine modification is found at Thr161. Phosphoserine occurs at positions 162 and 168. 4 stretches are compositionally biased toward low complexity: residues 162–175, 228–251, 263–293, and 329–340; these read SGDV…SSSP, SSGP…LTST, TSST…QTTS, and NSATGPNPASAS. Ser372, Ser375, and Ser378 each carry phosphoserine. Positions 446 to 467 are disordered; it reads QDAQQRDPQDLSRKENTAPDVA. Residues 449-462 show a composition bias toward basic and acidic residues; that stretch reads QQRDPQDLSRKENT. A phosphoserine mark is found at Ser696 and Ser705. A Phosphothreonine modification is found at Thr706. 2 positions are modified to phosphoserine: Ser749 and Ser750. Residues 791 to 813 form a C2H2-type 1; degenerate zinc finger; it reads YECRHCGKKYRWKSTLRRHENVE. The C2H2-type 2 zinc finger occupies 821–843; the sequence is HQCPYCPYKSKQRGNLGVHVRKH. The segment at 840 to 891 is disordered; that stretch reads VRKHHTDLPQLPSKRRSKYSMNRENGMSGSMSDDSQGKLIIDFNGKGELETK. Phosphoserine is present on Ser874.

In terms of tissue distribution, expressed in both mesoderm and ectoderm with expression highest in the mesectoderm by stage 11. Becomes enriched in a cluster of brain cells, in abdominal histoblasts, and in the embryonic imaginal disks during later stages.

It localises to the nucleus. Functionally, putative transcription factor required for axon growth and guidance in the central and peripheral nervous systems. Repels CNS axons away from the midline by promoting the expression of the midline repellent sli and its receptor robo. This chain is Longitudinals lacking protein, isoform G, found in Drosophila melanogaster (Fruit fly).